Reading from the N-terminus, the 145-residue chain is Small ribosomal subunit protein eS19 (145 aa).

A disordered region spans residues 120-145 (GGRRISENGQRDLDRIAAQTLEEDDE). The span at 123 to 134 (RISENGQRDLDR) shows a compositional bias: basic and acidic residues.

The protein belongs to the eukaryotic ribosomal protein eS19 family. Component of the small ribosomal subunit. Mature ribosomes consist of a small (40S) and a large (60S) subunit. The 40S subunit contains about 32 different proteins and 1 molecule of RNA (18S). The 60S subunit contains 45 different proteins and 3 molecules of RNA (25S, 5.8S and 5S).

It is found in the cytoplasm. In terms of biological role, component of the ribosome, a large ribonucleoprotein complex responsible for the synthesis of proteins in the cell. The small ribosomal subunit (SSU) binds messenger RNAs (mRNAs) and translates the encoded message by selecting cognate aminoacyl-transfer RNA (tRNA) molecules. The large subunit (LSU) contains the ribosomal catalytic site termed the peptidyl transferase center (PTC), which catalyzes the formation of peptide bonds, thereby polymerizing the amino acids delivered by tRNAs into a polypeptide chain. The nascent polypeptides leave the ribosome through a tunnel in the LSU and interact with protein factors that function in enzymatic processing, targeting, and the membrane insertion of nascent chains at the exit of the ribosomal tunnel. RPS19A is required for proper maturation of the small (40S) ribosomal subunit. The sequence is that of Small ribosomal subunit protein eS19 (RPS19A) from Candida albicans (strain SC5314 / ATCC MYA-2876) (Yeast).